The following is a 106-amino-acid chain: Foxo1-corepressor (106 aa).

A disordered region spans residues 1 to 44; the sequence is MGGPTRRHQEEGSAECLGGPSTRAAPGPGLRDFHFTTAGPSKAD. A Nuclear export signal motif is present at residues 78-87; it reads IGTLYIRLDL. A Phosphothreonine; by PKA modification is found at threonine 93.

As to quaternary structure, interacts with FOXO1 (via N-terminal domain); the interaction is direct, occurs in a forskolin-independent manner that prevents SIRT1 binding to FOXO1. Interacts with FOXO3. Does not interact with FOXO4. In terms of processing, phosphorylated at Thr-93 by PKA, leading to import into the nucleus. In terms of tissue distribution, expressed in adipocytes. Expressed in brown and white adipose tissue but not in liver. Protein levels in brown and white adipose tissues decrease following fasting (at protein level). Expressed in white and brown adipose tissues. Expressed in adipocytes. Not expressed in liver, skeletal muscle and brain.

It is found in the cytoplasm. It localises to the cytosol. Its subcellular location is the nucleus. Regulator of adipocytes that acts by repressing FOXO1 transcriptional activity. Acts by promoting acetylation of FOXO1, both by preventing the interaction between FOXO1 and SIRT1 deacetylase, and by mediating acetyltransferase activity in vitro. Regulates insulin sensitivity and energy metabolism. This Mus musculus (Mouse) protein is Foxo1-corepressor (Fcor).